The following is a 627-amino-acid chain: MNEMENTDPVLQDDLVSKYERELSTEQEEDTPVILTQLNEDGTTSNYFDKRKLKIAPRSTLQFKVGPPFELVRDYCPVVESHTGRTLDLRIIPRIDRGFDHIDEEWVGYKRNYFTLVSTFETANCDLDTFLKSSFDLLVEDSSVESRLRVQYFAIKIKAKNDDDDTEINLVQHTAKRDKGPQFCPSVCPLVPSPLPKHQIIREASNVRNITKMKKYDSTFYLHRDHVNYEEYGVDSLLFSYPEDSIQKVARYERVQFASSISVKKPSQQNKHFSLHVILGAVVDPDTFHGENPGIPYDELALKNGSKGMFVYLQEMKTPPLIIRGRSPSNYASSQRITVRTPSSVNSSQNSTKRKMPSMAQPLNESCLNARPSKRRSKVALGAPNSGASISPIKSRQSTPMEASKENEDPFFRPNKRVETLEHIQNKLGALKNQCPDSSLKYPSSSSRGMEGCLEKEDLVYSSSFSVNMKQIELKPARSFEHENIFKVGSLAFKKINELPHENYDITIEKKSMEQNYLRPEIGSRSECKTSYGNELSLSNISFSILPNSAENFHLETALFPATEEDVPRTFSRILETGSFQNYYQKMDAENADRVYSKGVKLIASGTLPSGIFNREELFEEDSFYKY.

Positions 28–335 (EEDTPVILTQ…RSPSNYASSQ (308 aa)) form a DNA-binding region, NDT80. The disordered stretch occupies residues 324 to 410 (RGRSPSNYAS…MEASKENEDP (87 aa)). Polar residues-rich tracts occupy residues 327–351 (SPSN…SQNS) and 386–401 (SGAS…STPM).

Binds to DNA as a monomer. Phosphorylated by pachytene checkpoint kinase IME2, but also phosphorylated in an IME2-independent manner. Phosphorylation probably eliminates SUM1-mediated repression and is also required for full transcriptional activation activity. Phosphorylation of the DNA-binding domain by IME2 does not alter DNA binding affinity.

Its subcellular location is the nucleus. Its function is as follows. Transcription factor required for successful completion of meiosis and spore formation. Gets activated after completion of meiotic recombination at the end of prophase I. Recognizes and binds to the middle sporulation element (MSE) 5'-C[AG]CAAA[AT]-3' in the promoter region of stage-specific genes that are required for progression through meiosis and sporulation. Competes for binding to MSE with the transcriptional repressor SUM1, which represses middle sporulation-specific genes during mitosis and early sporulation. This chain is Meiosis-specific transcription factor NDT80 (NDT80), found in Saccharomyces cerevisiae (strain ATCC 204508 / S288c) (Baker's yeast).